A 204-amino-acid chain; its full sequence is Recombination protein RecR (204 aa).

The segment at 58–75 (CSVCQNITDVGVDPCALC) adopts a C4-type zinc-finger fold. One can recognise a Toprim domain in the interval 83-181 (SVICVVESPV…HVTKIARGIP (99 aa)).

Belongs to the RecR family.

May play a role in DNA repair. It seems to be involved in an RecBC-independent recombinational process of DNA repair. It may act with RecF and RecO. This Pelodictyon phaeoclathratiforme (strain DSM 5477 / BU-1) protein is Recombination protein RecR.